Here is a 640-residue protein sequence, read N- to C-terminus: 1,4-alpha-glucan branching enzyme GlgB (640 aa).

D318 serves as the catalytic Nucleophile. The active-site Proton donor is E371.

It belongs to the glycosyl hydrolase 13 family. GlgB subfamily. In terms of assembly, monomer.

It catalyses the reaction Transfers a segment of a (1-&gt;4)-alpha-D-glucan chain to a primary hydroxy group in a similar glucan chain.. It functions in the pathway glycan biosynthesis; glycogen biosynthesis. Functionally, catalyzes the formation of the alpha-1,6-glucosidic linkages in glycogen by scission of a 1,4-alpha-linked oligosaccharide from growing alpha-1,4-glucan chains and the subsequent attachment of the oligosaccharide to the alpha-1,6 position. This chain is 1,4-alpha-glucan branching enzyme GlgB, found in Francisella tularensis subsp. novicida (strain U112).